The chain runs to 1169 residues: DNA repair protein RAD5 (1169 aa).

S2 carries the N-acetylserine modification. Phosphoserine occurs at positions 20, 23, 129, and 130. The segment covering M302–N317 has biased composition (basic and acidic residues). The tract at residues M302–T327 is disordered. Residues P519–D730 enclose the Helicase ATP-binding domain. Residue D532–T539 coordinates ATP. The DEGH box motif lies at D681–H684. Residues C914–R961 form an RING-type zinc finger. Positions K995–Q1165 constitute a Helicase C-terminal domain.

The protein belongs to the SNF2/RAD54 helicase family. In terms of assembly, homodimer. Interacts with POL30, RAD18, UBC9 and UBC13. Mg(2+) serves as cofactor. The cofactor is Mn(2+). Ca(2+) is required as a cofactor.

It localises to the cytoplasm. It is found in the nucleus. Its function is as follows. Probable helicase, member of the UBC2/RAD6 epistasis group. Functions with the DNA repair protein RAD18 in error-free postreplication DNA repair. Involved in the maintenance of wild-type rates of instability of simple repetitive sequences such as poly(GT) repeats. Seems to be involved in maintaining a balance which acts in favor of error-prone non-homologous joining during DNA double-strand breaks repairs. Recruits the UBC13-MMS2 dimer to chromatin for DNA repair. In Saccharomyces cerevisiae (strain ATCC 204508 / S288c) (Baker's yeast), this protein is DNA repair protein RAD5 (RAD5).